Here is a 310-residue protein sequence, read N- to C-terminus: NADP-dependent D-sorbitol-6-phosphate dehydrogenase (310 aa).

Tyrosine 48 serves as the catalytic Proton donor. Histidine 108 contacts substrate. 210 to 272 is an NADP(+) binding site; the sequence is TPLGGAAANK…SSKIQRLKEN (63 aa).

This sequence belongs to the aldo/keto reductase family.

It carries out the reaction D-sorbitol 6-phosphate + NADP(+) = aldehydo-D-glucose 6-phosphate + NADPH + H(+). Its function is as follows. Synthesizes sorbitol-6-phosphate, a key intermediate in the synthesis of sorbitol which is a major photosynthetic product in many members of the Rosaceae family. This Malus domestica (Apple) protein is NADP-dependent D-sorbitol-6-phosphate dehydrogenase (S6PDH).